A 185-amino-acid chain; its full sequence is Ribosome-recycling factor (185 aa).

This sequence belongs to the RRF family.

It localises to the cytoplasm. Responsible for the release of ribosomes from messenger RNA at the termination of protein biosynthesis. May increase the efficiency of translation by recycling ribosomes from one round of translation to another. This chain is Ribosome-recycling factor, found in Aliivibrio salmonicida (strain LFI1238) (Vibrio salmonicida (strain LFI1238)).